Consider the following 197-residue polypeptide: Probable adenylyl-sulfate kinase (197 aa).

An ATP-binding site is contributed by 33–40 (GLSGSGKS). The active-site Phosphoserine intermediate is the Ser-107.

This sequence belongs to the APS kinase family.

It catalyses the reaction adenosine 5'-phosphosulfate + ATP = 3'-phosphoadenylyl sulfate + ADP + H(+). It participates in sulfur metabolism; hydrogen sulfide biosynthesis; sulfite from sulfate: step 2/3. Catalyzes the synthesis of activated sulfate. This is Probable adenylyl-sulfate kinase (cysC) from Bacillus subtilis (strain 168).